The following is a 29-amino-acid chain: Trypsin inhibitor 1 (29 aa).

Cystine bridges form between C3–C20, C10–C22, and C16–C28.

It belongs to the protease inhibitor I7 (squash-type serine protease inhibitor) family.

The protein localises to the secreted. Functionally, inhibits trypsin. This chain is Trypsin inhibitor 1, found in Momordica repens.